A 189-amino-acid chain; its full sequence is Prostaglandin-H2 D-isomerase (189 aa).

A signal peptide spans 1–24 (MAALRMLWMGLVLLGLLGFPQTPA). At glutamine 25 the chain carries Pyrrolidone carboxylic acid. Asparagine 51 carries N-linked (GlcNAc...) asparagine glycosylation. Cysteine 65 functions as the Nucleophile in the catalytic mechanism. N-linked (GlcNAc...) asparagine glycosylation occurs at asparagine 78. An intrachain disulfide couples cysteine 89 to cysteine 186.

The protein belongs to the calycin superfamily. Lipocalin family. Monomer. In terms of tissue distribution, abundant in the brain and CNS, where it is expressed in tissues of the blood-brain barrier and secreted into the cerebro-spinal fluid. In the male reproductive system, it is expressed in the testis, efferent ducts and epididymis, and is secreted into the seminal fluid. In the eye, it is expressed in the pigmented epithelium of the retina and the nonpigmented epithelium of the ciliary body, and secreted into the aqueous humor. Low levels detected in various tissue fluids such as serum, normal urine, ascitic fluid and tear fluid. Also found in a number of other organs including the ear, heart and lung.

The protein localises to the rough endoplasmic reticulum. It is found in the nucleus membrane. It localises to the golgi apparatus. The protein resides in the cytoplasm. Its subcellular location is the perinuclear region. The protein localises to the secreted. The catalysed reaction is prostaglandin H2 = prostaglandin D2. Its function is as follows. Catalyzes the conversion of PGH2 to PGD2, a prostaglandin involved in smooth muscle contraction/relaxation and a potent inhibitor of platelet aggregation. Involved in a variety of CNS functions, such as sedation, NREM sleep and PGE2-induced allodynia, and may have an anti-apoptotic role in oligodendrocytes. Binds small non-substrate lipophilic molecules, including biliverdin, bilirubin, retinal, retinoic acid and thyroid hormone, and may act as a scavenger for harmful hydrophobic molecules and as a secretory retinoid and thyroid hormone transporter. Possibly involved in development and maintenance of the blood-brain, blood-retina, blood-aqueous humor and blood-testis barrier. It is likely to play important roles in both maturation and maintenance of the central nervous system and male reproductive system. Involved in PLA2G3-dependent maturation of mast cells. PLA2G3 is secreted by immature mast cells and acts on nearby fibroblasts upstream to PTDGS to synthesize PGD2, which in turn promotes mast cell maturation and degranulation via PTGDR. This Mus musculus (Mouse) protein is Prostaglandin-H2 D-isomerase (Ptgds).